Consider the following 124-residue polypeptide: Group 1 truncated hemoglobin GlbN (124 aa).

H46, H70, and H117 together coordinate heme.

Belongs to the truncated hemoglobin family. Group I subfamily. As to quaternary structure, monomer. Heme is required as a cofactor.

Forms a very stable complex with oxygen. The oxygen dissociation rate is 0.011 sec(-1). The protein is Group 1 truncated hemoglobin GlbN (glbN) of Synechocystis sp. (strain ATCC 27184 / PCC 6803 / Kazusa).